The sequence spans 163 residues: CASP-like protein 1C3 (163 aa).

The Cytoplasmic segment spans residues 1–6 (MAKIKK). Residues 7 to 27 (IFTNFLRLLALAATVVAIVFM) form a helical membrane-spanning segment. Residues 28-52 (VTSHDSAQVLNLTFTVKYSNTPVFK) are Extracellular-facing. N-linked (GlcNAc...) asparagine glycosylation is present at Asn-38. The chain crosses the membrane as a helical span at residues 53 to 73 (YFVIAEAIAGGYIVISILLSF). The Cytoplasmic portion of the chain corresponds to 74 to 79 (KSLFWR). Residues 80 to 100 (LLVILDMVTAVLLTSSISAAL) traverse the membrane as a helical segment. At 101–128 (AIAQVGKKGNTHAGWLPVCEQVPDFCDQ) the chain is on the extracellular side. The chain crosses the membrane as a helical span at residues 129–149 (VTIALIAGFAAAIIYFVLLLC). The Cytoplasmic portion of the chain corresponds to 150 to 163 (SLYVVLSPIFVVTP).

The protein belongs to the Casparian strip membrane proteins (CASP) family. As to quaternary structure, homodimer and heterodimers.

It is found in the cell membrane. The protein is CASP-like protein 1C3 of Populus trichocarpa (Western balsam poplar).